The sequence spans 341 residues: MSKRVRSSLILPAVCGLGLAAVLLSSCSSKAPQQPARQAGISGPGDYSRPHRDGAPWWDVDVSRIPDAVPMPHNGSVKANPYTVLGKTYYPMNDARAYRMVGTASWYGTKFHGQATANGETYDLYGMTAAHKTLPLPSYVRVTNLDNGKSVIVRVNDRGPFYSDRVIDLSFAAAKKLGYAETGTARVKVEGIDPVQWWAQRGRPAPMVLAQPKQAVAQAPAATQTQAVAMAQPIETYTPPPAQHAAAVLPVQIDSKKNASLPADGLYLQVGAFANPDAAELLKAKLSGVTAAPVFISSVVRNQQILHRVRLGPIGSADEVSRTQDSIRVANLGQPTLVRPD.

The N-terminal stretch at 1 to 26 (MSKRVRSSLILPAVCGLGLAAVLLSS) is a signal peptide. Residue C27 is the site of N-palmitoyl cysteine attachment. C27 carries S-diacylglycerol cysteine lipidation. The region spanning 260–341 (SLPADGLYLQ…LGQPTLVRPD (82 aa)) is the SPOR domain.

The protein belongs to the RlpA family.

The protein localises to the cell membrane. Lytic transglycosylase with a strong preference for naked glycan strands that lack stem peptides. Required for efficient separation of daughter cells and maintenance of rod shape. This is Endolytic peptidoglycan transglycosylase RlpA from Pseudomonas aeruginosa (strain UCBPP-PA14).